Consider the following 507-residue polypeptide: ATP synthase subunit alpha (507 aa).

Residue 169-176 participates in ATP binding; that stretch reads GDRQTGKT.

Belongs to the ATPase alpha/beta chains family. In terms of assembly, F-type ATPases have 2 components, CF(1) - the catalytic core - and CF(0) - the membrane proton channel. CF(1) has five subunits: alpha(3), beta(3), gamma(1), delta(1), epsilon(1). CF(0) has three main subunits: a(1), b(2) and c(9-12). The alpha and beta chains form an alternating ring which encloses part of the gamma chain. CF(1) is attached to CF(0) by a central stalk formed by the gamma and epsilon chains, while a peripheral stalk is formed by the delta and b chains.

It is found in the cell membrane. The enzyme catalyses ATP + H2O + 4 H(+)(in) = ADP + phosphate + 5 H(+)(out). In terms of biological role, produces ATP from ADP in the presence of a proton gradient across the membrane. The alpha chain is a regulatory subunit. The polypeptide is ATP synthase subunit alpha (Desulforudis audaxviator (strain MP104C)).